The sequence spans 373 residues: 3 beta-hydroxysteroid dehydrogenase/Delta 5--&gt;4-isomerase type 2 (373 aa).

Tyr-155 (proton acceptor) is an active-site residue. NAD(+) is bound at residue Lys-159. A helical transmembrane segment spans residues 288-308 (VPLLYWLAFLLETVSFLLSPI).

The protein belongs to the 3-beta-HSD family. Liver and kidney.

It localises to the endoplasmic reticulum membrane. The protein resides in the mitochondrion membrane. The enzyme catalyses a 3beta-hydroxy-Delta(5)-steroid + NAD(+) = a 3-oxo-Delta(5)-steroid + NADH + H(+). It carries out the reaction a 3-oxo-Delta(5)-steroid = a 3-oxo-Delta(4)-steroid. It catalyses the reaction pregnenolone + NAD(+) = pregn-5-ene-3,20-dione + NADH + H(+). The catalysed reaction is pregn-5-ene-3,20-dione = progesterone. The enzyme catalyses 3beta-hydroxyandrost-5-en-17-one + NAD(+) = androst-5-ene-3,17-dione + NADH + H(+). It carries out the reaction androst-5-ene-3,17-dione = androst-4-ene-3,17-dione. It participates in lipid metabolism; steroid biosynthesis. 3-beta-HSD is a bifunctional enzyme, that catalyzes the oxidative conversion of Delta(5)-ene-3-beta-hydroxy steroid, and the oxidative conversion of ketosteroids. The 3-beta-HSD enzymatic system plays a crucial role in the biosynthesis of all classes of hormonal steroids. This is 3 beta-hydroxysteroid dehydrogenase/Delta 5--&gt;4-isomerase type 2 from Mus musculus (Mouse).